Here is a 166-residue protein sequence, read N- to C-terminus: Large ribosomal subunit protein uL11x (166 aa).

The protein belongs to the universal ribosomal protein uL11 family.

Its function is as follows. Binds directly to 26S ribosomal RNA. This Arabidopsis thaliana (Mouse-ear cress) protein is Large ribosomal subunit protein uL11x (RPL12C).